Reading from the N-terminus, the 211-residue chain is Ribonuclease HII (211 aa).

Positions 2 to 211 (MLILGVDEAG…TAQRLKASSV (210 aa)) constitute an RNase H type-2 domain. A divalent metal cation-binding residues include Asp-8, Glu-9, and Asp-106.

Belongs to the RNase HII family. Mn(2+) is required as a cofactor. It depends on Mg(2+) as a cofactor.

Its subcellular location is the cytoplasm. The catalysed reaction is Endonucleolytic cleavage to 5'-phosphomonoester.. Its function is as follows. Endonuclease that specifically degrades the RNA of RNA-DNA hybrids. The protein is Ribonuclease HII of Methanothrix thermoacetophila (strain DSM 6194 / JCM 14653 / NBRC 101360 / PT) (Methanosaeta thermophila).